We begin with the raw amino-acid sequence, 657 residues long: 1-deoxy-D-xylulose-5-phosphate synthase (657 aa).

Thiamine diphosphate contacts are provided by residues His73 and 113-115 (SHA). Asp145 serves as a coordination point for Mg(2+). Thiamine diphosphate is bound by residues 146 to 147 (GA), Asn175, Tyr293, and Glu375. Asn175 contributes to the Mg(2+) binding site.

The protein belongs to the transketolase family. DXPS subfamily. Homodimer. Requires Mg(2+) as cofactor. The cofactor is thiamine diphosphate.

It carries out the reaction D-glyceraldehyde 3-phosphate + pyruvate + H(+) = 1-deoxy-D-xylulose 5-phosphate + CO2. The protein operates within metabolic intermediate biosynthesis; 1-deoxy-D-xylulose 5-phosphate biosynthesis; 1-deoxy-D-xylulose 5-phosphate from D-glyceraldehyde 3-phosphate and pyruvate: step 1/1. In terms of biological role, catalyzes the acyloin condensation reaction between C atoms 2 and 3 of pyruvate and glyceraldehyde 3-phosphate to yield 1-deoxy-D-xylulose-5-phosphate (DXP). This is 1-deoxy-D-xylulose-5-phosphate synthase from Paenarthrobacter aurescens (strain TC1).